The following is a 633-amino-acid chain: Probable potassium transport system protein Kup 3 (633 aa).

Transmembrane regions (helical) follow at residues 24–44 (LVLAALGVVYGDIGTSPLYAF), 61–81 (VLGILSLIVWALTIVVTLKYV), 114–134 (LVLGVIGASLFLGDAIITPAI), 148–168 (PALSNWVVPITLTIIAVLFFV), 180–200 (FGPVTALWFIVLGVSGAIHIF), 222–242 (IGSAIAVLGAVFLAVTGAEAL), 258–278 (WFSLVFPSLLLNYFGQGAFVL), 298–318 (IPMVCLATAATVIASQAVISG), 348–368 (IFMPQVNNLLFIFVAALVLFF), 377–397 (AYGIAVTGEMFITSILLFIVM), 405–425 (LTAALAVIVPITLIDAGFLAA), and 427–447 (IAKFAEGGWVPVAVASTMALI).

Belongs to the HAK/KUP transporter (TC 2.A.72) family.

It localises to the cell inner membrane. The catalysed reaction is K(+)(in) + H(+)(in) = K(+)(out) + H(+)(out). Its function is as follows. Transport of potassium into the cell. Likely operates as a K(+):H(+) symporter. The protein is Probable potassium transport system protein Kup 3 of Rhizobium johnstonii (strain DSM 114642 / LMG 32736 / 3841) (Rhizobium leguminosarum bv. viciae).